A 281-amino-acid polypeptide reads, in one-letter code: sn-glycerol-3-phosphate transport system permease protein UgpE (281 aa).

A run of 6 helical transmembrane segments spans residues 14-34 (VMLIVGILAVLFPLYVGFVAA), 85-105 (LAITVGKITVSILSAYAIVYF), 113-133 (FFWMIFLTLMLPVEVRIFPTV), 142-162 (MDSYTGLTLPLMASATATFLF), 188-210 (FFDMVLPLSKTNLAALFVITFIY), and 247-267 (WNQVMAAMLLTMLPPLLVVLL). The 192-residue stretch at 77-268 (LLNSFVMALA…LPPLLVVLLM (192 aa)) folds into the ABC transmembrane type-1 domain.

Belongs to the binding-protein-dependent transport system permease family. UgpAE subfamily. The complex is composed of two ATP-binding proteins (UgpC), two transmembrane proteins (UgpA and UgpE) and a solute-binding protein (UgpB).

Its subcellular location is the cell inner membrane. Functionally, part of the ABC transporter complex UgpBAEC involved in sn-glycerol-3-phosphate (G3P) import. Probably responsible for the translocation of the substrate across the membrane. The chain is sn-glycerol-3-phosphate transport system permease protein UgpE (ugpE) from Pectobacterium atrosepticum (strain SCRI 1043 / ATCC BAA-672) (Erwinia carotovora subsp. atroseptica).